Here is a 473-residue protein sequence, read N- to C-terminus: ATP synthase subunit beta (473 aa).

158–165 (GGAGVGKT) serves as a coordination point for ATP.

This sequence belongs to the ATPase alpha/beta chains family. F-type ATPases have 2 components, CF(1) - the catalytic core - and CF(0) - the membrane proton channel. CF(1) has five subunits: alpha(3), beta(3), gamma(1), delta(1), epsilon(1). CF(0) has three main subunits: a(1), b(2) and c(9-12). The alpha and beta chains form an alternating ring which encloses part of the gamma chain. CF(1) is attached to CF(0) by a central stalk formed by the gamma and epsilon chains, while a peripheral stalk is formed by the delta and b chains. The F(1)F(0) complex interacts with SpoIIIJ and YqjG; YqgA is found in the same complex.

It localises to the cell membrane. It is found in the membrane raft. The enzyme catalyses ATP + H2O + 4 H(+)(in) = ADP + phosphate + 5 H(+)(out). Produces ATP from ADP in the presence of a proton gradient across the membrane. The catalytic sites are hosted primarily by the beta subunits. The sequence is that of ATP synthase subunit beta from Bacillus subtilis (strain 168).